Consider the following 471-residue polypeptide: Heat shock 70 kDa protein 13 (471 aa).

Positions 1-22 are cleaved as a signal peptide; that stretch reads MAREMTILGSAVLTLLLAGYLA. A disordered region spans residues 314–352; it reads EEQDRKEPHSSDTELPKDKLSSADDHRVNSGFGRGLSDK. Residues 315–341 show a composition bias toward basic and acidic residues; sequence EQDRKEPHSSDTELPKDKLSSADDHRV.

It belongs to the heat shock protein 70 family. In terms of assembly, binds UBQLN2.

The protein localises to the microsome. It localises to the endoplasmic reticulum. In terms of biological role, has peptide-independent ATPase activity. This chain is Heat shock 70 kDa protein 13 (HSPA13), found in Pongo abelii (Sumatran orangutan).